Reading from the N-terminus, the 239-residue chain is Putative zinc finger protein 132L (239 aa).

The disordered stretch occupies residues aspartate 20–lysine 40. The span at proline 28–lysine 40 shows a compositional bias: basic and acidic residues. 2 consecutive C3H1-type zinc fingers follow at residues isoleucine 44–glutamate 68 and arginine 81–serine 106. Positions proline 128–glutamate 151 are disordered. Pro residues predominate over residues histidine 135–proline 147.

This Acheta domesticus (House cricket) protein is Putative zinc finger protein 132L.